We begin with the raw amino-acid sequence, 520 residues long: Cytochrome P450 monooxygenase TRI4 (520 aa).

A helical membrane pass occupies residues 10–30 (LVNIPISHAVGVVAASTVIYF). The N-linked (GlcNAc...) asparagine glycan is linked to N447. A heme-binding site is contributed by C455.

It belongs to the cytochrome P450 family. Heme is required as a cofactor.

Its subcellular location is the membrane. The protein operates within sesquiterpene biosynthesis; trichothecene biosynthesis. Its function is as follows. Cytochrome P450 monooxygenase; part of the core gene cluster that mediates the biosynthesis of trichothecenes, a very large family of chemically related bicyclic sesquiterpene compounds acting as mycotoxins, including T2-toxin. The biosynthesis of trichothecenes begins with the cyclization of farnesyl diphosphate to trichodiene and is catalyzed by the trichodiene synthase TRI5. Trichodiene undergoes a series of oxygenations catalyzed by the cytochrome P450 monooxygenase TRI4. TRI4 controls the addition of four oxygens at C-2, C-3, C-11, and the C-12, C-13-epoxide to form the intermediate isotrichotriol. Isotrichotriol then undergoes a non-enzymatic isomerization and cyclization to form isotrichodermol. During this process, the oxygen at the C-2 position becomes the pyran ring oxygen and the hydroxyl group at C-11 is lost. More complex type A trichothecenes are built by modifying isotrichodermol through a series of paired hydroxylation and acetylation or acylation steps. Isotrichodermol is converted to isotrichodermin by the acetyltransferase TRI101. TRI101 encodes a C-3 transacetylase that acts as a self-protection or resistance factor during biosynthesis and that the presence of a free C-3 hydroxyl group is a key component of Fusarium trichothecene phytotoxicity. A second hydroxyl group is added to C-15 by the trichothecene C-15 hydroxylase TRI11, producing 15-decalonectrin, which is then acetylated by TRI3, producing calonectrin. A third hydroxyl group is added at C-4 by the cytochrome P450 monooxygenase TRI13, converting calonectrin to 3,15-diacetoxyspirpenol, which is subsequently acetylated by the acetyltransferase TRI7. A fourth hydroxyl group is added to C-8 by the cytochrome P450 monooxygenase TRI1, followed by the addition of an isovaleryl moiety by TRI16. Finally, the acetyl group is removed from the C-3 position by the trichothecene C-3 esterase TRI8 to produce T-2 toxin. The polypeptide is Cytochrome P450 monooxygenase TRI4 (Fusarium sporotrichioides).